The primary structure comprises 432 residues: Glutamate-1-semialdehyde 2,1-aminomutase 1 (432 aa).

Residue lysine 268 is modified to N6-(pyridoxal phosphate)lysine.

Belongs to the class-III pyridoxal-phosphate-dependent aminotransferase family. HemL subfamily. Homodimer. Pyridoxal 5'-phosphate is required as a cofactor.

The protein localises to the cytoplasm. It carries out the reaction (S)-4-amino-5-oxopentanoate = 5-aminolevulinate. Its pathway is porphyrin-containing compound metabolism; protoporphyrin-IX biosynthesis; 5-aminolevulinate from L-glutamyl-tRNA(Glu): step 2/2. This Bacillus licheniformis (strain ATCC 14580 / DSM 13 / JCM 2505 / CCUG 7422 / NBRC 12200 / NCIMB 9375 / NCTC 10341 / NRRL NRS-1264 / Gibson 46) protein is Glutamate-1-semialdehyde 2,1-aminomutase 1.